The sequence spans 394 residues: Envelope glycoprotein D (394 aa).

The signal sequence occupies residues Met-1–Ser-25. The interval Lys-26–Pro-57 is interaction with TNFRSF14. Residues Lys-26 to Met-340 lie on the Virion surface side of the membrane. His-64 contributes to the Zn(2+) binding site. Cystine bridges form between Cys-91–Cys-214, Cys-131–Cys-227, and Cys-143–Cys-152. Residues Asn-119 and Asn-146 are each glycosylated (N-linked (GlcNAc...) asparagine; by host). A Zn(2+)-binding site is contributed by Asp-240. Residues Leu-261–Glu-305 form a profusion region. A disordered region spans residues Ser-275 to Ser-301. N-linked (GlcNAc...) asparagine; by host glycosylation is present at Asn-287. A helical membrane pass occupies residues Gly-341–Val-361. Over Tyr-362 to Tyr-394 the chain is Intravirion. A disordered region spans residues Ile-375 to Tyr-394.

Belongs to the herpesviridae glycoprotein D family. As to quaternary structure, homodimer. Interacts with host receptor TNFRSF14. Interacts with host receptor NECTIN1. Interacts (via profusion domain) with gB; this interaction occurs in the absence of gH/gL. Interacts (via profusion domain) with gH/gL heterodimer; this interaction occurs in the absence of gB. Associates with the gB-gH/gL-gD complex. Interacts (via C-terminus) with UL11 tegument protein. Interacts (via C-terminus) with VP22 tegument protein; this interaction has been demonstrated in other strains, but might be very weak since PubMed:19279114 has failed to see it. Interacts with host RSAD2.

The protein resides in the virion membrane. It localises to the host Golgi apparatus. Envelope glycoprotein that binds to the host cell entry receptors NECTIN1, TNFRSF14/HVEM and 3-O-sulfated heparan sulfate, promoting the virus entry into host cells. May trigger fusion with host membrane, by recruiting the fusion machinery composed of gB and gH/gL. The protein is Envelope glycoprotein D (gD) of Homo sapiens (Human).